We begin with the raw amino-acid sequence, 601 residues long: Alpha-terpineol synthase, chloroplastic (601 aa).

A chloroplast-targeting transit peptide spans 1-47; it reads MSTISIHHVGILRNPLHSKSKRASINKPWSLSLPRSSSASRLVEPCR. Mn(2+) is bound by residues Asp-357 and Asp-361. Residues 357–361 carry the DDXXD motif motif; the sequence is DDVYD. 2 homodimerization regions span residues 363–369 and 435–471; these read YGTLDEL and EAEW…ELSL. Mn(2+) is bound by residues Asp-499 and Glu-507.

Belongs to the terpene synthase family. Homodimer. Requires Mn(2+) as cofactor. The cofactor is Mg(2+).

Its subcellular location is the plastid. It localises to the chloroplast. It carries out the reaction (2E)-geranyl diphosphate + H2O = (S)-alpha-terpineol + diphosphate. It catalyses the reaction (2E)-geranyl diphosphate + H2O = (R)-alpha-terpineol + diphosphate. It participates in secondary metabolite biosynthesis; terpenoid biosynthesis. In terms of biological role, involved in the biosynthesis of phenolic monoterpenes natural products. Monoterpene synthase which catalyzes the conversion of geranyl diphosphate (GPP) to alpha-terpineol (isomer is not determined). This is Alpha-terpineol synthase, chloroplastic from Thymus caespititius (Cretan thyme).